We begin with the raw amino-acid sequence, 187 residues long: Elongation factor P (187 aa).

Lysine 34 is subject to N6-(3,6-diaminohexanoyl)-5-hydroxylysine.

The protein belongs to the elongation factor P family. May be beta-lysylated on the epsilon-amino group of Lys-34 by the combined action of EpmA and EpmB, and then hydroxylated on the C5 position of the same residue by EpmC (if this protein is present). Lysylation is critical for the stimulatory effect of EF-P on peptide-bond formation. The lysylation moiety may extend toward the peptidyltransferase center and stabilize the terminal 3-CCA end of the tRNA. Hydroxylation of the C5 position on Lys-34 may allow additional potential stabilizing hydrogen-bond interactions with the P-tRNA.

Its subcellular location is the cytoplasm. It functions in the pathway protein biosynthesis; polypeptide chain elongation. Functionally, involved in peptide bond synthesis. Alleviates ribosome stalling that occurs when 3 or more consecutive Pro residues or the sequence PPG is present in a protein, possibly by augmenting the peptidyl transferase activity of the ribosome. Modification of Lys-34 is required for alleviation. The chain is Elongation factor P from Buchnera aphidicola subsp. Schizaphis graminum (strain Sg).